The following is a 92-amino-acid chain: MPKKNAISESTNSTPETAPAMTFESSLKELEQIVARLESGELALEEALSKFERGIQLARQGQQTLQQAEQRVQILLNDDTQSPLSHFSPDTE.

The segment at 1–22 (MPKKNAISESTNSTPETAPAMT) is disordered. Over residues 7-16 (ISESTNSTPE) the composition is skewed to polar residues.

This sequence belongs to the XseB family. As to quaternary structure, heterooligomer composed of large and small subunits.

It is found in the cytoplasm. It carries out the reaction Exonucleolytic cleavage in either 5'- to 3'- or 3'- to 5'-direction to yield nucleoside 5'-phosphates.. Its function is as follows. Bidirectionally degrades single-stranded DNA into large acid-insoluble oligonucleotides, which are then degraded further into small acid-soluble oligonucleotides. This is Exodeoxyribonuclease 7 small subunit from Photorhabdus laumondii subsp. laumondii (strain DSM 15139 / CIP 105565 / TT01) (Photorhabdus luminescens subsp. laumondii).